The primary structure comprises 282 residues: Small ribosomal subunit protein uS2 (282 aa).

The interval 245 to 265 is disordered; the sequence is AEEAVEELPLPTGEAQDEASS.

This sequence belongs to the universal ribosomal protein uS2 family.

This is Small ribosomal subunit protein uS2 from Chlamydia trachomatis serovar A (strain ATCC VR-571B / DSM 19440 / HAR-13).